Reading from the N-terminus, the 432-residue chain is Trigger factor (432 aa).

The PPIase FKBP-type domain occupies 161 to 246 (EDRVTIDFTG…LKKVEERELP (86 aa)).

Belongs to the FKBP-type PPIase family. Tig subfamily.

The protein resides in the cytoplasm. It catalyses the reaction [protein]-peptidylproline (omega=180) = [protein]-peptidylproline (omega=0). Involved in protein export. Acts as a chaperone by maintaining the newly synthesized protein in an open conformation. Functions as a peptidyl-prolyl cis-trans isomerase. This is Trigger factor from Citrobacter koseri (strain ATCC BAA-895 / CDC 4225-83 / SGSC4696).